Here is a 213-residue protein sequence, read N- to C-terminus: Methylthioribulose-1-phosphate dehydratase (213 aa).

Positions 104 and 106 each coordinate Zn(2+).

It belongs to the aldolase class II family. MtnB subfamily. Requires Zn(2+) as cofactor.

The catalysed reaction is 5-(methylsulfanyl)-D-ribulose 1-phosphate = 5-methylsulfanyl-2,3-dioxopentyl phosphate + H2O. Its pathway is amino-acid biosynthesis; L-methionine biosynthesis via salvage pathway; L-methionine from S-methyl-5-thio-alpha-D-ribose 1-phosphate: step 2/6. Catalyzes the dehydration of methylthioribulose-1-phosphate (MTRu-1-P) into 2,3-diketo-5-methylthiopentyl-1-phosphate (DK-MTP-1-P). This Stenotrophomonas maltophilia (strain R551-3) protein is Methylthioribulose-1-phosphate dehydratase.